Here is a 665-residue protein sequence, read N- to C-terminus: Protein phosphatase 1 regulatory subunit 21 (665 aa).

Coiled coils occupy residues 1 to 84 (MTDL…SESK), 125 to 206 (LEAQ…RKYQ), 426 to 477 (ESRE…EAQV), and 586 to 627 (KRLA…EDQL).

In terms of assembly, component of the FERRY complex.

It localises to the early endosome. Its function is as follows. Component of the FERRY complex (Five-subunit Endosomal Rab5 and RNA/ribosome intermediary). The FERRY complex directly interacts with mRNAs and RAB5A, and functions as a RAB5A effector involved in the localization and the distribution of specific mRNAs most likely by mediating their endosomal transport. The complex recruits mRNAs and ribosomes to early endosomes through direct mRNA-interaction. Putative regulator of protein phosphatase 1 (PP1) activity. May play a role in the endosomal sorting process or in endosome maturation pathway. The polypeptide is Protein phosphatase 1 regulatory subunit 21 (ppp1r21) (Danio rerio (Zebrafish)).